The following is a 638-amino-acid chain: Signal recognition particle receptor subunit alpha (638 aa).

Disordered stretches follow at residues 132–244 and 283–316; these read APTT…GKKA and GTGS…TKGT. Composition is skewed to basic and acidic residues over residues 137–146 and 153–165; these read KKFEDSEKAK and IETR…EKAK. Ser-177 carries the phosphoserine modification. Residues 204–239 are compositionally biased toward basic and acidic residues; it reads LSKEELIRRKREEFIQKHGRGMEKSNKSTKSDAPKE. Residue Thr-284 is modified to Phosphothreonine. Ser-296, Ser-297, and Ser-298 each carry phosphoserine. The segment covering 304–314 has biased composition (polar residues); sequence AQNSTKPSATK. The NG domain stretch occupies residues 419–636; sequence YVVTFCGVNG…NAKAVVAALM (218 aa). 425 to 432 is a GTP binding site; it reads GVNGVGKS. Ser-473 carries the post-translational modification Phosphoserine. 520–524 provides a ligand contact to GTP; sequence DTAGR. At Thr-578 the chain carries Phosphothreonine. 588-591 lines the GTP pocket; it reads TKFD.

This sequence belongs to the GTP-binding SRP family. Heterodimer with SRPRB. Interacts with the signal recognition particle (SRP) complex subunit SRP54. As to quaternary structure, (Microbial infection) May interact with Zika virus strain Mr-766 non-structural protein 4A/NS4A. May interact with Zika virus French Polynesia 10087PF/2013 non-structural protein 4A/NS4A. In terms of assembly, (Microbial infection) May interact with Dengue virus DENV2 16681 non-structural protein 4A/NS4A.

The protein localises to the endoplasmic reticulum membrane. Component of the signal recognition particle (SRP) complex receptor (SR). Ensures, in conjunction with the SRP complex, the correct targeting of the nascent secretory proteins to the endoplasmic reticulum membrane system. Forms a guanosine 5'-triphosphate (GTP)-dependent complex with the SRP subunit SRP54. SRP receptor compaction and GTPase rearrangement drive SRP-mediated cotranslational protein translocation into the ER. The polypeptide is Signal recognition particle receptor subunit alpha (Homo sapiens (Human)).